The sequence spans 701 residues: Lutropin-choriogonadotropic hormone receptor (701 aa).

Positions 1–26 (MGRPSLALRLLLALLLLPPPAPLLWA) are cleaved as a signal peptide. The Extracellular portion of the chain corresponds to 27–365 (LRPAPCPEPC…EDIMGYNFLR (339 aa)). An N-linked (GlcNAc...) asparagine glycan is attached at asparagine 101. LRR repeat units lie at residues 124 to 149 (LPRL…IFSS), 151 to 173 (FNFI…AFQG), 174 to 198 (MNNE…AFNG), 200 to 222 (TLIS…AFRG), 223 to 246 (ATGP…GLES), and 250 to 271 (LIAT…TNLL). Asparagine 176 and asparagine 197 each carry an N-linked (GlcNAc...) asparagine glycan. Residues asparagine 293, asparagine 301, and asparagine 315 are each glycosylated (N-linked (GlcNAc...) asparagine). Tyrosine 333 carries the sulfotyrosine modification. Residues 366 to 387 (VLIWLINILAITGNVTVLFVLL) traverse the membrane as a helical segment. The Cytoplasmic segment spans residues 388-397 (TSRYKLTVPR). Residues 398 to 418 (FLMCNLSFADFCMGLYLLLIA) form a helical membrane-spanning segment. Topologically, residues 419-441 (SVDAQTKGQYYNHAIDWQTGSGC) are extracellular. An intrachain disulfide couples cysteine 441 to cysteine 516. Residues 442-464 (SAAGFFTVFASELSVYTLTVITL) traverse the membrane as a helical segment. Topologically, residues 465–484 (ERWHTITYAIQLDQKLRLKH) are cytoplasmic. Residues 485–507 (AIPVMLGGWLFSTLIAVLPLVGV) form a helical membrane-spanning segment. Over 508-527 (SNYMKVSICLPMDVESTLSQ) the chain is Extracellular. Residues 528 to 551 (VYILTILILNVMAFIIICACYIKI) traverse the membrane as a helical segment. At 552–572 (YFAVQNPELMATNKDTKIAKK) the chain is on the cytoplasmic side. A helical membrane pass occupies residues 573–596 (MAVLIFTDFTCMAPISFFAISAAF). Topologically, residues 597–607 (KVPLITVTNSK) are extracellular. A helical membrane pass occupies residues 608-629 (VLLVLFYPVNSCANPFLYAIFT). Over 630-701 (KAFQRDFFLL…VLDKTCYKEC (72 aa)) the chain is Cytoplasmic. S-palmitoyl cysteine attachment occurs at residues cysteine 645 and cysteine 646.

It belongs to the G-protein coupled receptor 1 family. FSH/LSH/TSH subfamily. In terms of processing, sulfated.

The protein localises to the cell membrane. Its function is as follows. Receptor for lutropin-choriogonadotropic hormone. The activity of this receptor is mediated by G proteins which activate adenylate cyclase. This Bos taurus (Bovine) protein is Lutropin-choriogonadotropic hormone receptor (LHCGR).